Consider the following 304-residue polypeptide: Nod factor export ATP-binding protein I (304 aa).

Positions 6-236 (IDFQQVEKRY…EIGCDVIEIY (231 aa)) constitute an ABC transporter domain. Position 38-45 (38-45 (GPNGAGKT)) interacts with ATP.

The protein belongs to the ABC transporter superfamily. Lipooligosaccharide exporter (TC 3.A.1.102) family. The complex is composed of two ATP-binding proteins (NodI) and two transmembrane proteins (NodJ).

It localises to the cell inner membrane. Functionally, part of the ABC transporter complex NodIJ involved in the export of the nodulation factors (Nod factors), the bacterial signal molecules that induce symbiosis and subsequent nodulation induction. Nod factors are LCO (lipo-chitin oligosaccharide), a modified beta-1,4-linked N-acetylglucosamine oligosaccharide. This subunit is responsible for energy coupling to the transport system. The sequence is that of Nod factor export ATP-binding protein I from Burkholderia thailandensis (strain ATCC 700388 / DSM 13276 / CCUG 48851 / CIP 106301 / E264).